Here is a 388-residue protein sequence, read N- to C-terminus: Na(+)/H(+) antiporter NhaA (388 aa).

11 consecutive transmembrane segments (helical) span residues 14-34 (GGII…MGAT), 59-79 (MLLW…GLEV), 95-115 (AFPV…YLAF), 125-145 (GWAI…ALLG), 154-174 (IFLM…IALF), 179-199 (LSIV…LLNL), 219-239 (VLKS…FIPL), 254-274 (VLHP…NAGV), 292-312 (IIAG…WLAL), 328-348 (IMAV…IASL), and 360-380 (WAKL…YSWL).

Belongs to the NhaA Na(+)/H(+) (TC 2.A.33) antiporter family.

The protein localises to the cell inner membrane. It catalyses the reaction Na(+)(in) + 2 H(+)(out) = Na(+)(out) + 2 H(+)(in). Its function is as follows. Na(+)/H(+) antiporter that extrudes sodium in exchange for external protons. This is Na(+)/H(+) antiporter NhaA from Salmonella choleraesuis (strain SC-B67).